The following is a 120-amino-acid chain: Large ribosomal subunit protein uL22 (120 aa).

This sequence belongs to the universal ribosomal protein uL22 family. In terms of assembly, part of the 50S ribosomal subunit.

Functionally, this protein binds specifically to 23S rRNA; its binding is stimulated by other ribosomal proteins, e.g. L4, L17, and L20. It is important during the early stages of 50S assembly. It makes multiple contacts with different domains of the 23S rRNA in the assembled 50S subunit and ribosome. The globular domain of the protein is located near the polypeptide exit tunnel on the outside of the subunit, while an extended beta-hairpin is found that lines the wall of the exit tunnel in the center of the 70S ribosome. This Corynebacterium aurimucosum (strain ATCC 700975 / DSM 44827 / CIP 107346 / CN-1) (Corynebacterium nigricans) protein is Large ribosomal subunit protein uL22.